Reading from the N-terminus, the 314-residue chain is Ribosomal RNA small subunit methyltransferase H (314 aa).

S-adenosyl-L-methionine contacts are provided by residues 36-38 (GGH), aspartate 56, phenylalanine 80, aspartate 102, and glutamine 109.

The protein belongs to the methyltransferase superfamily. RsmH family.

The protein resides in the cytoplasm. It carries out the reaction cytidine(1402) in 16S rRNA + S-adenosyl-L-methionine = N(4)-methylcytidine(1402) in 16S rRNA + S-adenosyl-L-homocysteine + H(+). In terms of biological role, specifically methylates the N4 position of cytidine in position 1402 (C1402) of 16S rRNA. This Citrobacter koseri (strain ATCC BAA-895 / CDC 4225-83 / SGSC4696) protein is Ribosomal RNA small subunit methyltransferase H.